The sequence spans 2008 residues: Histone-lysine N-methyltransferase SETD1B (2008 aa).

The segment covering 1–20 (MSFREIKAGEKAKHPEDHGK) has biased composition (basic and acidic residues). The interval 1–42 (MSFREIKAGEKAKHPEDHGKKQSSSWINGMENSTQASTSVEK) is disordered. Residues 22–39 (QSSSWINGMENSTQASTS) are compositionally biased toward polar residues. The 89-residue stretch at 111–199 (DEFYVGPVPP…NIIHVELDTK (89 aa)) folds into the RRM domain. 9 disordered regions span residues 249–390 (NLSS…SSYK), 402–652 (FPQS…APIT), 682–725 (PPGF…PPLP), 950–1172 (RKEP…DKRE), 1309–1328 (TKLP…PGRE), 1345–1461 (VPSS…FTPT), 1563–1600 (VGAS…MYSG), 1674–1712 (KEEE…PQFR), and 1814–1842 (EEPP…RRSE). Residues 251–264 (SSVGSSVTPNSSTP) show a composition bias toward low complexity. Polar residues-rich tracts occupy residues 265–293 (FSHD…QGTP), 301–315 (PFSQ…QTTP), 360–381 (HQFS…TPPL), 405–414 (SEEQPFAQTS), and 456–491 (DSNS…QHNS). Residues 492–521 (LDSRIEMLLKEQRTKLPFLNEHDSDNEVRM) show a composition bias toward basic and acidic residues. Residues 524–537 (SPISSSSSQLSPIP) show a composition bias toward low complexity. 2 stretches are compositionally biased toward polar residues: residues 540-560 (GSNS…SSTG) and 582-604 (ASLN…QLNR). 2 stretches are compositionally biased toward basic and acidic residues: residues 606 to 617 (SKVETLEVKEMV) and 626 to 636 (EKMDESQHSSG). Positions 637-646 (EDMEISDDEM) are enriched in acidic residues. The span at 979 to 997 (ERDRDASDTTSDLSKKDAE) shows a compositional bias: basic and acidic residues. The span at 1011–1020 (LDSEGEEGDE) shows a compositional bias: acidic residues. The span at 1021–1031 (TSGKEEESSSE) shows a compositional bias: basic and acidic residues. 2 stretches are compositionally biased toward acidic residues: residues 1050 to 1094 (EEEE…EEDA) and 1105 to 1149 (ESSD…EDQD). The span at 1150–1172 (REAMVAETEHEPASHELPDDKRE) shows a compositional bias: basic and acidic residues. A compositionally biased stretch (low complexity) spans 1345-1356 (VPSSTVPLPSTP). Over residues 1378-1392 (SIEEEIPRTPGRDIL) the composition is skewed to basic and acidic residues. The span at 1418–1427 (LTGSSLTLSS) shows a compositional bias: low complexity. Basic residues-rich tracts occupy residues 1577–1587 (LPKRRPGRPRR) and 1681–1690 (KPKRQWRRQK). Residues 1699–1710 (IPSPEYSPPQPQ) are compositionally biased toward pro residues. A RxxxRR motif motif is present at residues 1840-1845 (RSEQRR). Positions 1869-1986 (KKLKFCKSHI…VNEEITYDYK (118 aa)) constitute an SET domain. Tyrosine 1985 serves as a coordination point for S-adenosyl-L-methionine. One can recognise a Post-SET domain in the interval 1992–2008 (VKIPCLCGSENCRGTLN).

The protein belongs to the class V-like SAM-binding methyltransferase superfamily. In terms of assembly, component of the SET1B/COMPASS complex.

The protein resides in the nucleus speckle. The protein localises to the chromosome. The catalysed reaction is L-lysyl(4)-[histone H3] + 3 S-adenosyl-L-methionine = N(6),N(6),N(6)-trimethyl-L-lysyl(4)-[histone H3] + 3 S-adenosyl-L-homocysteine + 3 H(+). Its function is as follows. Histone methyltransferase that specifically methylates 'Lys-4' of histone H3, when part of the SET1 histone methyltransferase (HMT) complex, but not if the neighboring 'Lys-9' residue is already methylated. H3 'Lys-4' methylation represents a specific tag for epigenetic transcriptional activation. This chain is Histone-lysine N-methyltransferase SETD1B (SETD1B), found in Gallus gallus (Chicken).